Reading from the N-terminus, the 271-residue chain is 4-diphosphocytidyl-2-C-methyl-D-erythritol kinase (271 aa).

Residue K8 is part of the active site. 90–100 (PFGAGLGGGSA) provides a ligand contact to ATP. D132 is a catalytic residue.

The protein belongs to the GHMP kinase family. IspE subfamily.

The enzyme catalyses 4-CDP-2-C-methyl-D-erythritol + ATP = 4-CDP-2-C-methyl-D-erythritol 2-phosphate + ADP + H(+). Its pathway is isoprenoid biosynthesis; isopentenyl diphosphate biosynthesis via DXP pathway; isopentenyl diphosphate from 1-deoxy-D-xylulose 5-phosphate: step 3/6. Catalyzes the phosphorylation of the position 2 hydroxy group of 4-diphosphocytidyl-2C-methyl-D-erythritol. The polypeptide is 4-diphosphocytidyl-2-C-methyl-D-erythritol kinase (Parabacteroides distasonis (strain ATCC 8503 / DSM 20701 / CIP 104284 / JCM 5825 / NCTC 11152)).